Here is a 198-residue protein sequence, read N- to C-terminus: Probable chorismate pyruvate-lyase (198 aa).

Substrate-binding residues include Arg76, Leu114, and Glu172.

Belongs to the UbiC family.

It is found in the cytoplasm. It carries out the reaction chorismate = 4-hydroxybenzoate + pyruvate. It functions in the pathway cofactor biosynthesis; ubiquinone biosynthesis. Functionally, removes the pyruvyl group from chorismate, with concomitant aromatization of the ring, to provide 4-hydroxybenzoate (4HB) for the ubiquinone pathway. The sequence is that of Probable chorismate pyruvate-lyase from Bordetella avium (strain 197N).